We begin with the raw amino-acid sequence, 351 residues long: S-adenosylmethionine:tRNA ribosyltransferase-isomerase (351 aa).

Belongs to the QueA family. As to quaternary structure, monomer.

The protein localises to the cytoplasm. The catalysed reaction is 7-aminomethyl-7-carbaguanosine(34) in tRNA + S-adenosyl-L-methionine = epoxyqueuosine(34) in tRNA + adenine + L-methionine + 2 H(+). Its pathway is tRNA modification; tRNA-queuosine biosynthesis. Its function is as follows. Transfers and isomerizes the ribose moiety from AdoMet to the 7-aminomethyl group of 7-deazaguanine (preQ1-tRNA) to give epoxyqueuosine (oQ-tRNA). The chain is S-adenosylmethionine:tRNA ribosyltransferase-isomerase from Roseobacter denitrificans (strain ATCC 33942 / OCh 114) (Erythrobacter sp. (strain OCh 114)).